The following is a 482-amino-acid chain: Kynurenine 3-monooxygenase (482 aa).

This sequence belongs to the aromatic-ring hydroxylase family. KMO subfamily. FAD serves as cofactor.

It localises to the mitochondrion outer membrane. The enzyme catalyses L-kynurenine + NADPH + O2 + H(+) = 3-hydroxy-L-kynurenine + NADP(+) + H2O. The protein operates within cofactor biosynthesis; NAD(+) biosynthesis; quinolinate from L-kynurenine: step 1/3. Functionally, catalyzes the hydroxylation of L-kynurenine (L-Kyn) to form 3-hydroxy-L-kynurenine (L-3OHKyn). Required for synthesis of quinolinic acid. This is Kynurenine 3-monooxygenase from Phaeosphaeria nodorum (strain SN15 / ATCC MYA-4574 / FGSC 10173) (Glume blotch fungus).